Here is a 278-residue protein sequence, read N- to C-terminus: Large ribosomal subunit protein uL2 (278 aa).

2 disordered regions span residues 26 to 57 (RSTP…QGGG) and 225 to 278 (VMNP…NKKR). Residues 258 to 278 (RSPKKASNKYIVRRRKTNKKR) show a composition bias toward basic residues.

It belongs to the universal ribosomal protein uL2 family. As to quaternary structure, part of the 50S ribosomal subunit. Forms a bridge to the 30S subunit in the 70S ribosome.

One of the primary rRNA binding proteins. Required for association of the 30S and 50S subunits to form the 70S ribosome, for tRNA binding and peptide bond formation. It has been suggested to have peptidyltransferase activity; this is somewhat controversial. Makes several contacts with the 16S rRNA in the 70S ribosome. This chain is Large ribosomal subunit protein uL2, found in Streptomyces coelicolor (strain ATCC BAA-471 / A3(2) / M145).